The following is a 185-amino-acid chain: Elongation factor P (185 aa).

This sequence belongs to the elongation factor P family.

It is found in the cytoplasm. Its pathway is protein biosynthesis; polypeptide chain elongation. Involved in peptide bond synthesis. Stimulates efficient translation and peptide-bond synthesis on native or reconstituted 70S ribosomes in vitro. Probably functions indirectly by altering the affinity of the ribosome for aminoacyl-tRNA, thus increasing their reactivity as acceptors for peptidyl transferase. The chain is Elongation factor P (efp) from Synechococcus elongatus (strain ATCC 33912 / PCC 7942 / FACHB-805) (Anacystis nidulans R2).